The primary structure comprises 348 residues: 3'-dehydrocarminate deglycosidase alpha subunit (348 aa).

Glutamate 145 contacts Mg(2+). Residue histidine 147 is the Proton acceptor of the active site. Mg(2+)-binding residues include aspartate 177, histidine 275, and glutamate 311.

The protein belongs to the C-glycoside deglycosidase alpha subunit family. Heterodimer composed of an alpha subunit (CarB) and a beta subunit (CarC). Mg(2+) is required as a cofactor.

It catalyses the reaction 3'-dehydrocarminate + H(+) = kermesate + 1,5-anhydro-D-erythro-hex-1-en-3-ulose. With respect to regulation, activity is strongly reduced in the presence of chelating agents. Carbon-carbon bond-cleaving enzyme which participates in a carminate degradation pathway. Cleaves the C-C bond in 3'-dehydrocarminate to form kermesate. Also shows weak activity with other C-glycosides, such as 3''-dehydropuerarin (3''-oxo-puerarin), 3''-dehydroisoorientin (3''-oxo-homoorientin) and 3'-dehydromangiferin (3'-oxo-mangiferin). This Microbacterium sp protein is 3'-dehydrocarminate deglycosidase alpha subunit.